The following is a 158-amino-acid chain: Large ribosomal subunit protein uL11 (158 aa).

The protein belongs to the universal ribosomal protein uL11 family. As to quaternary structure, part of the ribosomal stalk of the 50S ribosomal subunit. Interacts with L10 and the large rRNA to form the base of the stalk. L10 forms an elongated spine to which L12 dimers bind in a sequential fashion forming a multimeric L10(L12)X complex.

In terms of biological role, forms part of the ribosomal stalk which helps the ribosome interact with GTP-bound translation factors. In Methanospirillum hungatei JF-1 (strain ATCC 27890 / DSM 864 / NBRC 100397 / JF-1), this protein is Large ribosomal subunit protein uL11.